Here is a 270-residue protein sequence, read N- to C-terminus: Energy-coupling factor transporter ATP-binding protein EcfA (270 aa).

Positions 5–238 (VEIENLTFFY…QLLEQNGLKA (234 aa)) constitute an ABC transporter domain. 38 to 45 (GHNGAGKS) serves as a coordination point for ATP.

Belongs to the ABC transporter superfamily. Energy-coupling factor EcfA family. In terms of assembly, forms a stable energy-coupling factor (ECF) transporter complex composed of 2 membrane-embedded substrate-binding proteins (S component), 2 ATP-binding proteins (A component) and 2 transmembrane proteins (T component).

It localises to the cell membrane. ATP-binding (A) component of a common energy-coupling factor (ECF) ABC-transporter complex. Unlike classic ABC transporters this ECF transporter provides the energy necessary to transport a number of different substrates. The polypeptide is Energy-coupling factor transporter ATP-binding protein EcfA (Carboxydothermus hydrogenoformans (strain ATCC BAA-161 / DSM 6008 / Z-2901)).